An 883-amino-acid chain; its full sequence is N,N'-diacetylchitobiase (883 aa).

The N-terminal stretch at 1 to 17 (MLKHSLIAASVITTLAG) is a signal peptide. Cys-18 carries the N-palmitoyl cysteine lipid modification. Cys-18 carries the S-diacylglycerol cysteine lipid modification. Intrachain disulfides connect Cys-54-Cys-64, Cys-394-Cys-402, and Cys-502-Cys-577. Catalysis depends on Glu-537, which acts as the Proton donor.

The protein belongs to the glycosyl hydrolase 20 family. Post-translationally, this protein is probably a lipoprotein, its processing is inhibited by globomycin.

Its subcellular location is the cell outer membrane. It carries out the reaction Hydrolysis of terminal non-reducing N-acetyl-D-hexosamine residues in N-acetyl-beta-D-hexosaminides.. It functions in the pathway glycan degradation; chitin degradation. Hydrolysis of terminal, non-reducing N-acetyl-beta-D-glucosamine residues in chitobiose and higher analogs, and in glycoproteins. This chain is N,N'-diacetylchitobiase (chb), found in Vibrio harveyi (Beneckea harveyi).